The chain runs to 161 residues: MASIAVCPGSFDPVTYGHLDIIKRGAHIFEQVYVCVLNNSSKKPLFSVEERCELLREVTKDIPNITVETSQGLLIDYAKRKNAKAILRGLRAVSDFEYEMQGTSVNRVLDESIETFFMMTNNQYSFLSSSIVKEVARYNGSVSEFVPPEVELALQQKFRQG.

Residue serine 10 coordinates substrate. ATP contacts are provided by residues serine 10–phenylalanine 11 and histidine 18. Substrate is bound by residues lysine 42, leucine 74, and arginine 88. Residues arginine 88–glycine 89, glutamate 99, and tyrosine 124–serine 130 each bind ATP.

The protein belongs to the bacterial CoaD family. In terms of assembly, homohexamer. It depends on Mg(2+) as a cofactor.

The protein resides in the cytoplasm. It catalyses the reaction (R)-4'-phosphopantetheine + ATP + H(+) = 3'-dephospho-CoA + diphosphate. Its pathway is cofactor biosynthesis; coenzyme A biosynthesis; CoA from (R)-pantothenate: step 4/5. In terms of biological role, reversibly transfers an adenylyl group from ATP to 4'-phosphopantetheine, yielding dephospho-CoA (dPCoA) and pyrophosphate. The protein is Phosphopantetheine adenylyltransferase of Bacillus subtilis (strain 168).